Consider the following 51-residue polypeptide: Large ribosomal subunit protein eL39 (51 aa).

Positions 1–19 (MSHNMKGQKKRLAKAHKQN) are enriched in basic residues. The tract at residues 1–23 (MSHNMKGQKKRLAKAHKQNSRVP) is disordered.

It belongs to the eukaryotic ribosomal protein eL39 family.

The protein is Large ribosomal subunit protein eL39 of Methanosarcina mazei (strain ATCC BAA-159 / DSM 3647 / Goe1 / Go1 / JCM 11833 / OCM 88) (Methanosarcina frisia).